The primary structure comprises 1122 residues: DNA polymerase (1122 aa).

Belongs to the DNA polymerase type-B family. In terms of assembly, heterodimer with the terminal protein; this heterodimer binds to bp 9 to 18 of the genome. Forms a complex with viral pTP, DBP and hosts NFIA and POU2F1/OCT1 for initiation of replication.

The protein localises to the host nucleus. The catalysed reaction is DNA(n) + a 2'-deoxyribonucleoside 5'-triphosphate = DNA(n+1) + diphosphate. Its function is as follows. Eukaryotic-type DNA polymerase involved in viral genomic replication. DNA synthesis is protein primed, and acts in a strand displacement replication. Assembles in complex with viral pTP, DBP, host NFIA and host POU2F1/OCT1 on viral origin of replication. The polymerase covalently transfers dCMP onto pTP, thereby initiating complementary strand synthesis. The polypeptide is DNA polymerase (Human adenovirus B serotype 7 (HAdV-7)).